The following is a 181-amino-acid chain: Monofunctional chorismate mutase (181 aa).

Positions 1–20 are cleaved as a signal peptide; the sequence is MIRHIAIFLCSLLMCSTTFA. Residues 21–102 form the Chorismate mutase domain; sequence DSVTSVSLGA…ASKAIQYRYL (82 aa). Arginine 38, lysine 49, aspartate 58, glutamate 62, and glutamine 98 together coordinate substrate.

The protein localises to the periplasm. The enzyme catalyses chorismate = prephenate. It participates in metabolic intermediate biosynthesis; prephenate biosynthesis; prephenate from chorismate: step 1/1. In terms of biological role, catalyzes the Claisen rearrangement of chorismate to prephenate. The chain is Monofunctional chorismate mutase from Salmonella typhimurium.